Reading from the N-terminus, the 201-residue chain is ADP-ribosylation factor-related protein 1 (201 aa).

Residue Met1 is modified to N-acetylmethionine. Residues 24-31 (GLDNAGKT), 75-79 (DLGGQ), and 134-137 (NKQD) each bind GTP.

The protein belongs to the small GTPase superfamily. Arf family. In terms of assembly, interacts with SYS1.

It localises to the golgi apparatus. The protein localises to the trans-Golgi network. Trans-Golgi-associated GTPase that regulates protein sorting. Controls the targeting of ARL1 and its effector to the trans-Golgi. Required for the lipidation of chylomicrons in the intestine and required for VLDL lipidation in the liver. In Pongo abelii (Sumatran orangutan), this protein is ADP-ribosylation factor-related protein 1 (ARFRP1).